A 234-amino-acid chain; its full sequence is Peptidyl-prolyl cis-trans isomerase FKBP17-3, chloroplastic (234 aa).

The transit peptide at 1–28 (MATLFTATVPSHHRFVSPSQHPKQSLLS) directs the protein to the chloroplast. Residues 130 to 228 (GYLVVFDVKG…DYIIEVDTVY (99 aa)) enclose the PPIase FKBP-type domain.

The protein belongs to the FKBP-type PPIase family.

It is found in the plastid. It localises to the chloroplast thylakoid lumen. It carries out the reaction [protein]-peptidylproline (omega=180) = [protein]-peptidylproline (omega=0). Its function is as follows. PPIases accelerate the folding of proteins. It catalyzes the cis-trans isomerization of proline imidic peptide bonds in oligopeptides. The protein is Peptidyl-prolyl cis-trans isomerase FKBP17-3, chloroplastic (FKBP17-3) of Arabidopsis thaliana (Mouse-ear cress).